Here is a 101-residue protein sequence, read N- to C-terminus: Small ribosomal subunit protein uS14 (101 aa).

This sequence belongs to the universal ribosomal protein uS14 family. As to quaternary structure, part of the 30S ribosomal subunit. Contacts proteins S3 and S10.

Its function is as follows. Binds 16S rRNA, required for the assembly of 30S particles and may also be responsible for determining the conformation of the 16S rRNA at the A site. The protein is Small ribosomal subunit protein uS14 of Saccharophagus degradans (strain 2-40 / ATCC 43961 / DSM 17024).